Consider the following 398-residue polypeptide: MLEFEVLKTDARTGEGANAHPGSHARRGQLTLTHGVVQTPIFMPVGTYGTVKGVMPQSLHEMGAQIILGNTFHLWMRPGLDVMKQFGGLHRFESWDKPILTDSGGFQVWSLGDMRKISEEGVKFASPVNGDKLFLTPEISMQIQTVLNSDIVMQFDECTPYDTKGHITTESEARSSMELSLRWAKRCVAEFDKLENPNALFGIVQGGMYQNLRHESLEALVELDLPGYAVGGVSVGEPKEEMQRIMAHTPHRLPADKPRYLMGVGTPEDLVEGVGAGIDMFDCVMPTRNARNGHLFTRFGDLKIRNARHKADEQPLDTTCTCYTCKGRTMPDGSTSGGFSRAYLHHLDRCGEMLGPMLASIHNLHYYLNLMQEIRDALDAGRFGEFAARFRTDRLRGV.

Asp102 acts as the Proton acceptor in catalysis. Substrate is bound by residues 102–106, Asp156, Gln205, and Gly232; that span reads DSGGF. The segment at 263–269 is RNA binding; sequence GVGTPED. Asp282 functions as the Nucleophile in the catalytic mechanism. An RNA binding; important for wobble base 34 recognition region spans residues 287 to 291; sequence TRNAR. Residues Cys320, Cys322, Cys325, and His362 each contribute to the Zn(2+) site.

It belongs to the queuine tRNA-ribosyltransferase family. Homodimer. Within each dimer, one monomer is responsible for RNA recognition and catalysis, while the other monomer binds to the replacement base PreQ1. Zn(2+) serves as cofactor.

It carries out the reaction 7-aminomethyl-7-carbaguanine + guanosine(34) in tRNA = 7-aminomethyl-7-carbaguanosine(34) in tRNA + guanine. It functions in the pathway tRNA modification; tRNA-queuosine biosynthesis. Catalyzes the base-exchange of a guanine (G) residue with the queuine precursor 7-aminomethyl-7-deazaguanine (PreQ1) at position 34 (anticodon wobble position) in tRNAs with GU(N) anticodons (tRNA-Asp, -Asn, -His and -Tyr). Catalysis occurs through a double-displacement mechanism. The nucleophile active site attacks the C1' of nucleotide 34 to detach the guanine base from the RNA, forming a covalent enzyme-RNA intermediate. The proton acceptor active site deprotonates the incoming PreQ1, allowing a nucleophilic attack on the C1' of the ribose to form the product. After dissociation, two additional enzymatic reactions on the tRNA convert PreQ1 to queuine (Q), resulting in the hypermodified nucleoside queuosine (7-(((4,5-cis-dihydroxy-2-cyclopenten-1-yl)amino)methyl)-7-deazaguanosine). This is Queuine tRNA-ribosyltransferase from Polaromonas sp. (strain JS666 / ATCC BAA-500).